The sequence spans 585 residues: Putative indole-3-acetic acid-amido synthetase GH3.9 (585 aa).

Belongs to the IAA-amido conjugating enzyme family.

Its function is as follows. Catalyzes the synthesis of indole-3-acetic acid (IAA)-amino acid conjugates, providing a mechanism for the plant to cope with the presence of excess auxin. The chain is Putative indole-3-acetic acid-amido synthetase GH3.9 (GH3.9) from Arabidopsis thaliana (Mouse-ear cress).